The following is a 160-amino-acid chain: Calcium and integrin-binding family member 3 (160 aa).

3 EF-hand domains span residues 39 to 74 (KDNP…MSEM), 76 to 111 (PRDL…LTRG), and 117 to 152 (EVTL…APDF). Residues aspartate 89, asparagine 91, aspartate 93, tyrosine 95, aspartate 100, aspartate 130, aspartate 132, aspartate 134, arginine 136, and aspartate 141 each contribute to the Ca(2+) site.

In terms of assembly, monomer and homodimer. Interacts with ITGA2B (via C-terminus cytoplasmic tail region); the interaction is stabilized/increased in a calcium and magnesium-dependent manner. Interacts with TMC1. Expressed in heart, liver and inner ear. In the inner ear, expressed in vestibule and basilar membrane cells. Expressed in megakaryocytes and endothelial cells.

In terms of biological role, acts as an auxiliary subunit of the sensory mechanoelectrical transduction (MET) channel in hair cells. Plays a role in regulating hair cell MET channel localization and function. The protein is Calcium and integrin-binding family member 3 (Cib3) of Mus musculus (Mouse).